Consider the following 750-residue polypeptide: Photosystem I P700 chlorophyll a apoprotein A1 (750 aa).

The next 8 membrane-spanning stretches (helical) occupy residues 70–93 (VFSA…FHGA), 156–179 (LYCT…FHYH), 195–219 (LNHH…HVSL), 291–309 (TAHH…GHMY), 346–369 (WHAQ…HHMY), 385–411 (LSLF…IFMV), 433–455 (AIIS…LYIH), and 531–549 (FLVH…LILL). [4Fe-4S] cluster-binding residues include Cys-573 and Cys-582. A run of 2 helical transmembrane segments spans residues 589 to 610 (HVFL…HFSW) and 664 to 686 (LSAY…MFLF). His-675 lines the chlorophyll a' pocket. The chlorophyll a site is built by Met-683 and Tyr-691. Trp-692 lines the phylloquinone pocket. A helical transmembrane segment spans residues 724 to 744 (AVGVTHYLLGGIATTWAFFLA).

The protein belongs to the PsaA/PsaB family. The PsaA/B heterodimer binds the P700 chlorophyll special pair and subsequent electron acceptors. PSI consists of a core antenna complex that captures photons, and an electron transfer chain that converts photonic excitation into a charge separation. The eukaryotic PSI reaction center is composed of at least 11 subunits. P700 is a chlorophyll a/chlorophyll a' dimer, A0 is one or more chlorophyll a, A1 is one or both phylloquinones and FX is a shared 4Fe-4S iron-sulfur center. is required as a cofactor.

The protein localises to the plastid. It localises to the chloroplast thylakoid membrane. It carries out the reaction reduced [plastocyanin] + hnu + oxidized [2Fe-2S]-[ferredoxin] = oxidized [plastocyanin] + reduced [2Fe-2S]-[ferredoxin]. Its function is as follows. PsaA and PsaB bind P700, the primary electron donor of photosystem I (PSI), as well as the electron acceptors A0, A1 and FX. PSI is a plastocyanin-ferredoxin oxidoreductase, converting photonic excitation into a charge separation, which transfers an electron from the donor P700 chlorophyll pair to the spectroscopically characterized acceptors A0, A1, FX, FA and FB in turn. Oxidized P700 is reduced on the lumenal side of the thylakoid membrane by plastocyanin. The polypeptide is Photosystem I P700 chlorophyll a apoprotein A1 (Helianthus annuus (Common sunflower)).